Here is a 433-residue protein sequence, read N- to C-terminus: UDP-N-acetylglucosamine 1-carboxyvinyltransferase 2 (433 aa).

23–24 (KN) serves as a coordination point for phosphoenolpyruvate. Arg96 is a binding site for UDP-N-acetyl-alpha-D-glucosamine. Cys120 functions as the Proton donor in the catalytic mechanism. Cys120 bears the 2-(S-cysteinyl)pyruvic acid O-phosphothioketal mark. UDP-N-acetyl-alpha-D-glucosamine is bound by residues 125–129 (RPIDL), Asp308, and Val330.

It belongs to the EPSP synthase family. MurA subfamily.

It is found in the cytoplasm. The enzyme catalyses phosphoenolpyruvate + UDP-N-acetyl-alpha-D-glucosamine = UDP-N-acetyl-3-O-(1-carboxyvinyl)-alpha-D-glucosamine + phosphate. It functions in the pathway cell wall biogenesis; peptidoglycan biosynthesis. Its function is as follows. Cell wall formation. Adds enolpyruvyl to UDP-N-acetylglucosamine. This is UDP-N-acetylglucosamine 1-carboxyvinyltransferase 2 from Enterococcus faecalis (strain ATCC 700802 / V583).